The following is an 88-amino-acid chain: Beta-insect excitatory toxin LqhIT1d (88 aa).

The first 18 residues, 1–18 (MKFFLLFLVVLPIMGVLG), serve as a signal peptide directing secretion. Positions 20–83 (KNGFAVDSNG…ISDTRKKLCD (64 aa)) constitute an LCN-type CS-alpha/beta domain. Intrachain disulfides connect C34/C55, C40/C60, C44/C62, and C56/C82.

It belongs to the long (4 C-C) scorpion toxin superfamily. Sodium channel inhibitor family. Beta subfamily. As to expression, expressed by the venom gland.

The protein resides in the secreted. Its function is as follows. Excitatory insect toxins induce a spastic paralysis. They bind voltage-independently at site-4 of sodium channels (Nav) and shift the voltage of activation toward more negative potentials thereby affecting sodium channel activation and promoting spontaneous and repetitive firing. The protein is Beta-insect excitatory toxin LqhIT1d of Leiurus hebraeus (Hebrew deathstalker scorpion).